We begin with the raw amino-acid sequence, 24 residues long: FLPAVLRVAAQVVPTVFCAISKKC.

Residues Cys18 and Cys24 are joined by a disulfide bond.

In terms of tissue distribution, expressed by the skin glands.

Its subcellular location is the secreted. Functionally, has antibacterial activity against E.coli and S.aureus strains. Has antifungal activity against C.albicans. Has hemolytic activity against rabbit erythrocytes. The polypeptide is Brevinin-1JDb (Odorrana jingdongensis (Jingdong frog)).